Consider the following 133-residue polypeptide: Small ribosomal subunit protein uS8 (133 aa).

It belongs to the universal ribosomal protein uS8 family. Part of the 30S ribosomal subunit. Contacts proteins S5 and S12.

Its function is as follows. One of the primary rRNA binding proteins, it binds directly to 16S rRNA central domain where it helps coordinate assembly of the platform of the 30S subunit. This Synechococcus sp. (strain WH7803) protein is Small ribosomal subunit protein uS8.